The following is a 120-amino-acid chain: NAD(P)H-quinone oxidoreductase subunit 3, chloroplastic (120 aa).

3 consecutive transmembrane segments (helical) span residues 9 to 29 (IFWAFLIISSVIPILAFLISA), 64 to 84 (MFALVFVVFDVETVFLYPWAM), and 88 to 108 (VLGVPVFIEAFIFMLILIVGL).

The protein belongs to the complex I subunit 3 family. NDH is composed of at least 16 different subunits, 5 of which are encoded in the nucleus.

The protein localises to the plastid. The protein resides in the chloroplast thylakoid membrane. It catalyses the reaction a plastoquinone + NADH + (n+1) H(+)(in) = a plastoquinol + NAD(+) + n H(+)(out). It carries out the reaction a plastoquinone + NADPH + (n+1) H(+)(in) = a plastoquinol + NADP(+) + n H(+)(out). Functionally, NDH shuttles electrons from NAD(P)H:plastoquinone, via FMN and iron-sulfur (Fe-S) centers, to quinones in the photosynthetic chain and possibly in a chloroplast respiratory chain. The immediate electron acceptor for the enzyme in this species is believed to be plastoquinone. Couples the redox reaction to proton translocation, and thus conserves the redox energy in a proton gradient. The protein is NAD(P)H-quinone oxidoreductase subunit 3, chloroplastic of Citrus sinensis (Sweet orange).